A 101-amino-acid polypeptide reads, in one-letter code: DNA-binding protein Fis (101 aa).

The H-T-H motif DNA-binding region spans 77 to 96 (QTRAANMLGINRGTLRKKLK).

It belongs to the transcriptional regulatory Fis family. As to quaternary structure, homodimer.

Activates ribosomal RNA transcription. Plays a direct role in upstream activation of rRNA promoters. The polypeptide is DNA-binding protein Fis (Shewanella pealeana (strain ATCC 700345 / ANG-SQ1)).